Consider the following 497-residue polypeptide: Protein nucleotidyltransferase YdiU (497 aa).

ATP is bound by residues Gly88, Gly90, Arg91, Lys110, Asp122, Gly123, Arg173, and Arg180. The Proton acceptor role is filled by Asp249. Mg(2+) is bound by residues Asn250 and Asp259. Asp259 serves as a coordination point for ATP.

Belongs to the SELO family. The cofactor is Mg(2+). It depends on Mn(2+) as a cofactor.

It carries out the reaction L-seryl-[protein] + ATP = 3-O-(5'-adenylyl)-L-seryl-[protein] + diphosphate. It catalyses the reaction L-threonyl-[protein] + ATP = 3-O-(5'-adenylyl)-L-threonyl-[protein] + diphosphate. The catalysed reaction is L-tyrosyl-[protein] + ATP = O-(5'-adenylyl)-L-tyrosyl-[protein] + diphosphate. The enzyme catalyses L-histidyl-[protein] + UTP = N(tele)-(5'-uridylyl)-L-histidyl-[protein] + diphosphate. It carries out the reaction L-seryl-[protein] + UTP = O-(5'-uridylyl)-L-seryl-[protein] + diphosphate. It catalyses the reaction L-tyrosyl-[protein] + UTP = O-(5'-uridylyl)-L-tyrosyl-[protein] + diphosphate. Nucleotidyltransferase involved in the post-translational modification of proteins. It can catalyze the addition of adenosine monophosphate (AMP) or uridine monophosphate (UMP) to a protein, resulting in modifications known as AMPylation and UMPylation. The sequence is that of Protein nucleotidyltransferase YdiU from Methylorubrum extorquens (strain CM4 / NCIMB 13688) (Methylobacterium extorquens).